Here is a 493-residue protein sequence, read N- to C-terminus: MALLLLGVWGILLLLGLWGLLQGCTRSPSLAPRWPPGPRPLPFLGNLHLLGVTQQDRALMELSERYGPMFTIHLGSQKTVVLSGYEVVREALVGTGHELADRPPIPIFQHIQRGGGIFFSSGARWRAGRQFTVRTLQSLGVQQPSMVGKVLQELACLKGQLDSYGGQPLPLALLGWAPCNITFTLLFGQRFDYQDPVFVSLLSLIDQVMVLLGSPGIQLFNTFPRLGAFLRLHRPVLSKIEEVRTILRTLLETRRPPLPTGGPAQSYVEALLQQGQEDDPEDMFGEANVLACTLDMVMAGTETTAATLQWAVFLMVKHPHVQGRVQEELDRVLGPGQLPQPEHQRALPYTSAVLHEVQRYITLLPHVPRCTAADIQLGGYLLPKGTPVIPLLTSVLLDKTQWETPSQFNPNHFLDAKGRFMKRGAFLPFSAGRRVCVGKSLARTELFLLFAGLLQRYRLLPPPGLSPADLDLRPAPAFTMRPPAQTLCVVPRS.

Residues 1–23 form the signal peptide; the sequence is MALLLLGVWGILLLLGLWGLLQG. Asn180 carries N-linked (GlcNAc...) asparagine glycosylation. Cys436 is a heme binding site.

The protein belongs to the cytochrome P450 family. Heme serves as cofactor. In terms of tissue distribution, detected in colon, ileum, and testes.

The protein resides in the endoplasmic reticulum lumen. It localises to the cell membrane. It is found in the microsome membrane. It catalyses the reaction all-trans-retinoate + reduced [NADPH--hemoprotein reductase] + O2 = all-trans-4-hydroxyretinoate + oxidized [NADPH--hemoprotein reductase] + H2O + H(+). The enzyme catalyses 1-(9Z-octadecenoyl)-sn-glycero-3-phosphocholine + reduced [NADPH--hemoprotein reductase] + O2 = 1-[8-hydroxy-(9Z)-octadecenoyl]-sn-glycero-3-phosphocholine + oxidized [NADPH--hemoprotein reductase] + H2O + H(+). It carries out the reaction 1-(9Z-octadecenoyl)-sn-glycero-3-phosphocholine + reduced [NADPH--hemoprotein reductase] + O2 = 1-[11-hydroxy-(9Z)-octadecenoyl]-sn-glycero-3-phosphocholine + oxidized [NADPH--hemoprotein reductase] + H2O + H(+). The catalysed reaction is 1-(9Z-octadecenoyl)-sn-glycero-3-phosphocholine + reduced [NADPH--hemoprotein reductase] + O2 = 1-[(9S,10R)-epoxy-octadecanoyl]-sn-glycero-3-phosphocholine + oxidized [NADPH--hemoprotein reductase] + H2O + H(+). It catalyses the reaction 1-(9Z-octadecenoyl)-sn-glycero-3-phosphocholine + reduced [NADPH--hemoprotein reductase] + O2 = 1-[(9R,10S)-epoxy-octadecanoyl]-sn-glycero-3-phosphocholine + oxidized [NADPH--hemoprotein reductase] + H2O + H(+). A cytochrome P450 monooxygenase that may play a role in retinoid and phospholipid metabolism. Catalyzes the hydroxylation of saturated carbon hydrogen bonds. Hydroxylates all trans-retinoic acid (atRA) to 4-hydroxyretinoate and may regulate atRA clearance. Other retinoids such as all-trans retinol and all-trans retinal are potential endogenous substrates. Catalyzes both epoxidation of double bonds and hydroxylation of carbon hydrogen bonds of the fatty acyl chain of 1-acylphospholipids/2-lysophospholipids. Can metabolize various lysophospholipids classes including lysophosphatidylcholines (LPCs), lysophosphatidylinositols (LPIs), lysophosphatidylserines (LPSs), lysophosphatidylglycerols (LPGs), lysophosphatidylethanolamines (LPEs) and lysophosphatidic acids (LPAs). Has low or no activity toward 2-acylphospholipids/1-lysophospholipids, diacylphospholipids and free fatty acids. May play a role in tumorigenesis by activating procarcinogens such as aflatoxin B1, polycyclic aromatic hydrocarbon dihydrodiols and aromatic amines. Mechanistically, uses molecular oxygen inserting one oxygen atom into a substrate, and reducing the second into a water molecule, with two electrons provided by NADPH via cytochrome P450 reductase (CPR; NADPH-ferrihemoprotein reductase). The chain is Cytochrome P450 2W1 (Cyp2w1) from Mus musculus (Mouse).